The chain runs to 418 residues: Protein fuzzy homolog (418 aa).

This sequence belongs to the fuzzy family. As to quaternary structure, component of the CPLANE (ciliogenesis and planar polarity effectors) complex, composed of INTU, FUZ and WDPCP. Interacts with CPLANE2. Interacts with CPLANE1.

It is found in the cytoplasm. The protein localises to the cytoskeleton. Its subcellular location is the cilium basal body. In terms of biological role, probable planar cell polarity effector involved in cilium biogenesis. May regulate protein and membrane transport to the cilium. Proposed to function as core component of the CPLANE (ciliogenesis and planar polarity effectors) complex involved in the recruitment of peripheral IFT-A proteins to basal bodies. May regulate the morphogenesis of hair follicles which depends on functional primary cilia. Binds phosphatidylinositol 3-phosphate with highest affinity, followed by phosphatidylinositol 4-phosphate and phosphatidylinositol 5-phosphate. This chain is Protein fuzzy homolog (FUZ), found in Homo sapiens (Human).